We begin with the raw amino-acid sequence, 167 residues long: Small ribosomal subunit protein uS5 (167 aa).

The S5 DRBM domain occupies 12-75 (LQEKLIAVNR…EKARRNMTTI (64 aa)).

This sequence belongs to the universal ribosomal protein uS5 family. In terms of assembly, part of the 30S ribosomal subunit. Contacts proteins S4 and S8.

Functionally, with S4 and S12 plays an important role in translational accuracy. In terms of biological role, located at the back of the 30S subunit body where it stabilizes the conformation of the head with respect to the body. The polypeptide is Small ribosomal subunit protein uS5 (Vibrio parahaemolyticus serotype O3:K6 (strain RIMD 2210633)).